Here is a 139-residue protein sequence, read N- to C-terminus: Oocyte zinc finger protein XlCOF14 (139 aa).

5 C2H2-type zinc fingers span residues 6 to 28 (FICS…SNVH), 33 to 55 (FPCT…QKIH), 61 to 83 (HKCT…HLSH), 89 to 111 (FSCF…QLSH), and 117 to 139 (FVCS…CHIH).

The protein belongs to the krueppel C2H2-type zinc-finger protein family.

The protein localises to the nucleus. Its function is as follows. May be involved in transcriptional regulation. In Xenopus laevis (African clawed frog), this protein is Oocyte zinc finger protein XlCOF14.